The following is a 357-amino-acid chain: GTPase Obg (357 aa).

Residues 1 to 159 (MKFVDEAEIQ…RTLKLELKLL (159 aa)) form the Obg domain. Residues 160–343 (ADIGMLGFPN…IMKSAMTLFE (184 aa)) form the OBG-type G domain. Residues 166–173 (GFPNVGKS), 191–195 (FTTLY), 213–216 (DVPG), 293–296 (NKAD), and 324–326 (SAV) contribute to the GTP site. Mg(2+)-binding residues include S173 and T193.

This sequence belongs to the TRAFAC class OBG-HflX-like GTPase superfamily. OBG GTPase family. Monomer. Mg(2+) serves as cofactor.

The protein resides in the cytoplasm. An essential GTPase which binds GTP, GDP and possibly (p)ppGpp with moderate affinity, with high nucleotide exchange rates and a fairly low GTP hydrolysis rate. Plays a role in control of the cell cycle, stress response, ribosome biogenesis and in those bacteria that undergo differentiation, in morphogenesis control. This is GTPase Obg from Xylella fastidiosa (strain M12).